The following is a 425-amino-acid chain: tRNA(Ile)-lysidine synthase (425 aa).

27–32 lines the ATP pocket; it reads SGGLDS.

It belongs to the tRNA(Ile)-lysidine synthase family.

The protein resides in the cytoplasm. It carries out the reaction cytidine(34) in tRNA(Ile2) + L-lysine + ATP = lysidine(34) in tRNA(Ile2) + AMP + diphosphate + H(+). Ligates lysine onto the cytidine present at position 34 of the AUA codon-specific tRNA(Ile) that contains the anticodon CAU, in an ATP-dependent manner. Cytidine is converted to lysidine, thus changing the amino acid specificity of the tRNA from methionine to isoleucine. The protein is tRNA(Ile)-lysidine synthase of Streptococcus sanguinis (strain SK36).